The following is a 228-amino-acid chain: Sec-independent protein translocase protein TatB (228 aa).

A helical transmembrane segment spans residues 1–21 (MFDFGLGELIFVGIIALIVLG). Disordered stretches follow at residues 106–164 (TPAD…TDKD) and 196–228 (VPHT…VRKS). Basic and acidic residues predominate over residues 135–151 (PSERSDTSAETLGDDRQ). Residues 206–228 (AINRKRDFRPKHRAKPKLRVRKS) are compositionally biased toward basic residues.

It belongs to the TatB family. As to quaternary structure, the Tat system comprises two distinct complexes: a TatABC complex, containing multiple copies of TatA, TatB and TatC subunits, and a separate TatA complex, containing only TatA subunits. Substrates initially bind to the TatABC complex, which probably triggers association of the separate TatA complex to form the active translocon.

It localises to the cell inner membrane. Part of the twin-arginine translocation (Tat) system that transports large folded proteins containing a characteristic twin-arginine motif in their signal peptide across membranes. Together with TatC, TatB is part of a receptor directly interacting with Tat signal peptides. TatB may form an oligomeric binding site that transiently accommodates folded Tat precursor proteins before their translocation. The sequence is that of Sec-independent protein translocase protein TatB from Neisseria gonorrhoeae (strain ATCC 700825 / FA 1090).